A 437-amino-acid chain; its full sequence is Proton/glutamate-aspartate symporter (437 aa).

Residues 1–5 (MKNIK) are Cytoplasmic-facing. Residues 6-26 (FSLAWQILFAMVLGILLGSYL) traverse the membrane as a helical segment. At 27 to 50 (HYHSDSRDWLVVNLLSPAGDIFIH) the chain is on the periplasmic side. The chain crosses the membrane as a helical span at residues 51–71 (LIKMIVVPIVISTLVVGIAGV). Residues 72–84 (GDAKQLGRIGAKT) lie on the Cytoplasmic side of the membrane. Residues 85–105 (IIYFEVITTVAIILGITLANV) traverse the membrane as a helical segment. At 106–159 (FQPGAGVDMSQLATVDISKYQSTTEAVQSSSHGIMGTILSLVPTNIVASMAKGE) the chain is on the periplasmic side. The chain crosses the membrane as a helical span at residues 160-180 (MLPIIFFSVLFGLGLSSLPAT). Topologically, residues 181–210 (HREPLVTVFRSISETMFKVTHMVMRYAPVG) are cytoplasmic. A helical membrane pass occupies residues 211 to 231 (VFALIAVTVANFGFSSLWPLA). Lysine 232 is a topological domain (periplasmic). A helical transmembrane segment spans residues 233-253 (LVLLVHFAILFFALVVLGIVA). Over 254-292 (RLCGLSVWILIRILKDELILAYSTASSESVLPRIIEKME) the chain is Cytoplasmic. A helical transmembrane segment spans residues 293–313 (AYGAPVSITSFVVPTGYSFNL). At 314 to 324 (DGSTLYQSIAA) the chain is on the periplasmic side. The chain crosses the membrane as a helical span at residues 325–345 (IFIAQLYGIDLSIWQEIILVL). Topologically, residues 346-361 (TLMVTSKGIAGVPGVS) are cytoplasmic. The helical transmembrane segment at 362–382 (FVVLLATLGSVGIPLEGLAFI) threads the bilayer. Residues 383 to 387 (AGVDR) lie on the Periplasmic side of the membrane. A helical membrane pass occupies residues 388-408 (ILDMARTALNVVGNALAVLVI). Residues 409-437 (AKWEHKFDRKKALAYEREVLGKFDKTADQ) lie on the Cytoplasmic side of the membrane.

This sequence belongs to the dicarboxylate/amino acid:cation symporter (DAACS) (TC 2.A.23) family. GltP subfamily.

Its subcellular location is the cell inner membrane. Glutamate uptake is inhibited by L-cysteate and beta-hydroxyaspartate. Inhibited by the uncoupler carbonylcyanide m-chlorophenylhydrazone (CCCP). Its function is as follows. Catalyzes the proton-dependent, binding-protein-independent transport of glutamate and aspartate. This Escherichia coli (strain K12) protein is Proton/glutamate-aspartate symporter.